We begin with the raw amino-acid sequence, 87 residues long: Omega-lycotoxin-Am1a (87 aa).

A signal peptide spans 1-17 (MKLSIFFVLFFIAIAYC). The propeptide occupies 18–40 (QPEFLDDEEDEVEETLPVAEEGR). 4 cysteine pairs are disulfide-bonded: Cys-44–Cys-59, Cys-51–Cys-64, Cys-58–Cys-84, and Cys-66–Cys-82.

This sequence belongs to the neurotoxin omega-lctx family. In terms of tissue distribution, expressed by the venom gland.

The protein localises to the secreted. Functionally, modulates Cav2.1/CACNA1A voltage-gated calcium channels (P/Q-type currents) in rat cerebellar Purkinje cells and hippocampal CA1-CA3 neurons. At saturating concentrations (&gt;10 nM) decelerates activation kinetics and slightly increases peak amplitude without affecting deactivation kinetics. In vivo, does not cause death when intravenously injected into mice. In rat models, through its activity on Cav2.1/CACNA1A, has an ameliorative effect on memory defects provoked by hyperstimulation of N-methyl-D-aspartate receptors (NMDARs) in the hippocampus. The sequence is that of Omega-lycotoxin-Am1a from Alopecosa marikovskyi (Wolf spider).